Here is a 223-residue protein sequence, read N- to C-terminus: Large ribosomal subunit protein uL3 (223 aa).

It belongs to the universal ribosomal protein uL3 family. As to quaternary structure, part of the 50S ribosomal subunit. Forms a cluster with proteins L14 and L19.

Its function is as follows. One of the primary rRNA binding proteins, it binds directly near the 3'-end of the 23S rRNA, where it nucleates assembly of the 50S subunit. The protein is Large ribosomal subunit protein uL3 of Cutibacterium acnes (strain DSM 16379 / KPA171202) (Propionibacterium acnes).